The chain runs to 261 residues: Glucanase inhibitor protein 3 (261 aa).

The N-terminal stretch at 1–21 (MKVLSSLAAALIALSAVDVEA) is a signal peptide. The Peptidase S1 domain maps to 29–260 (ILGGGKVPVG…GIEWINSVIK (232 aa)). Residues C56 and C72 are joined by a disulfide bond. N-linked (GlcNAc...) asparagine glycosylation occurs at N108. 2 disulfide bridges follow: C183/C195 and C205/C236.

This sequence belongs to the peptidase S1 family.

The protein localises to the secreted. Its function is as follows. Secreted effector that suppresses host plant glucan elicitor-mediated defense responses. Targets host endoglucanases and inhibits the endoglucanase-mediated release of elicitor-active glucan oligosaccharides from P.sojae cell walls. The chain is Glucanase inhibitor protein 3 (GIP3) from Phytophthora sojae (strain P6497) (Soybean stem and root rot agent).